The chain runs to 256 residues: Thiazole synthase (256 aa).

The active-site Schiff-base intermediate with DXP is the lysine 95. 1-deoxy-D-xylulose 5-phosphate contacts are provided by residues glycine 156, 182–183, and 204–205; these read AG and NT.

The protein belongs to the ThiG family. As to quaternary structure, homotetramer. Forms heterodimers with either ThiH or ThiS.

Its subcellular location is the cytoplasm. It catalyses the reaction [ThiS sulfur-carrier protein]-C-terminal-Gly-aminoethanethioate + 2-iminoacetate + 1-deoxy-D-xylulose 5-phosphate = [ThiS sulfur-carrier protein]-C-terminal Gly-Gly + 2-[(2R,5Z)-2-carboxy-4-methylthiazol-5(2H)-ylidene]ethyl phosphate + 2 H2O + H(+). It participates in cofactor biosynthesis; thiamine diphosphate biosynthesis. Its function is as follows. Catalyzes the rearrangement of 1-deoxy-D-xylulose 5-phosphate (DXP) to produce the thiazole phosphate moiety of thiamine. Sulfur is provided by the thiocarboxylate moiety of the carrier protein ThiS. In vitro, sulfur can be provided by H(2)S. In Salmonella paratyphi B (strain ATCC BAA-1250 / SPB7), this protein is Thiazole synthase.